Reading from the N-terminus, the 303-residue chain is MPPPRGTPNILEGPGDYDVTSTIHNDTYPAIDPLKADLSGKAVFITGGSKGLGRAMVLSFAKAGASYIAAGARSDMTELAKDVAAAAATAKRSPPKFLPIQLDVTDPQSVENAAVAVKSEFGRCDVVVNNAGVLGRFGGILQTDPQEWWQVLGVNLRGPYLVSRAFLPLLLESELKALVHVTSVAAHLLNPTLSAYQTSKMALLKFSQLVHAEFGSKGLVTFAVHPGNCPTDIMGGPDGLSEHEKLIFVETPEISADTIVYLTSEKRDWLGGRYINVTWDMPELIAMKDEIVQGDKLKVKFIY.

I45, D103, N130, R164, Y196, K200, and T231 together coordinate NADP(+). Y196 serves as the catalytic Proton donor. Residue K200 is the Lowers pKa of active site Tyr of the active site.

The protein belongs to the short-chain dehydrogenases/reductases (SDR) family.

Its pathway is secondary metabolite biosynthesis. Its function is as follows. Short chain dehydrogenase; part of the gene cluster that mediates the biosynthesis of azaphilone pigments (MonAzPs), a complex mixture of compounds with a common azaphilone skeleton very widely used as food colorants. Within the pathway, pigC intercepts the very reactive benzaldehyde produced by the nrPKS pigA to reduce the omega-1 carbonyl to the alcohol to provide the first stable enzyme-free MonAzPs intermediate, 6-(4-hydroxy-2-oxopentyl)-3-methyl-2,4-dioxocyclohexane carbaldehyde, also known as M7PKS-1. The first step of the pathway is performed by the nrPKS pigA that forms the hexaketide precursor from successive condensations of five malonyl-CoA units, with a simple acetyl-CoA starter unit. The role of esterase pigG is not clear, but it may play at most a supplementary role in the formation of the benzaldehyde produced by the pigA nrPKS. This very reactive benzaldehyde is intercepted by the pigC ketoreductase that to provide the first stable enzyme-free MonAzPs intermediate, M7PKS-1. The FAD-dependent monooxygenase pigN hydroxylates M7PKS-1 at C-4, which triggers the formation of the pyran ring. PigJ, pigK and pigD are involved in the acetylation of the pyran ring. PigJ and pigK form the two subunits of a dedicated fungal FAS that produces the side chain fatty acyl moiety of MonAzPs and pigD transfers the fatty acyl chain to the C-4 alcohol. PigM and pigO are involved in the elimination of the omega-1 alcohol. PigM acts as an O-acetyltransferase that synthesizes the putative O-11 acetyl intermediate whereas pigO eliminates acetic acid to yield an intermediate with a C10(11) double bond. The dehydration of the C-11 alcohol followed by the reduction of the C6(7) double bond by the NAD(P)H-dependent oxidoreductase pigE increases the electrophilicity of the C-5 ketone of the resulting acyl benzopyran. This in turn sets up the C-5 ketone for an intramolecular Knoevenagel aldol condensation with the C-20 enol of the side chain. This condensation affords the characteristic linear tricyclic carbon skeletons of the yellow pigments that serve as the common precursors for the classical yellow pigments monascin and ankaflavin, orange pigments rubopunctatin and monascorubrin, and red pigments ribropunctamine and monascorubramine. The FAD-dependent oxidoreductase pigF is especially invoved in the biosynthesis of orange and red pigments via desaturation of C6(7). This Monascus ruber (Mold) protein is Short chain dehydrogenase pigC.